A 370-amino-acid polypeptide reads, in one-letter code: Homospermidine synthase 1 (370 aa).

Belongs to the deoxyhypusine synthase family. As to quaternary structure, homotetramer. The cofactor is NAD(+). In terms of processing, the N-terminus is blocked. Expressed in roots.

It catalyses the reaction putrescine + spermidine = sym-homospermidine + propane-1,3-diamine. The protein operates within alkaloid biosynthesis; pyrrolizidine alkaloid biosynthesis. Catalyzes the transfer of an aminobutyl unit from spermidine onto putrescine. The resulting polyamine homospermidine is a precursor in the biosynthesis of pyrrolizidine alkaloids. This is Homospermidine synthase 1 (HSS1) from Senecio vernalis (Spring groundsel).